Reading from the N-terminus, the 626-residue chain is tRNA uridine 5-carboxymethylaminomethyl modification enzyme MnmG (626 aa).

13-18 (GGGHAG) provides a ligand contact to FAD. Position 273 to 287 (273 to 287 (GPRYCPSIEDKIHRF)) interacts with NAD(+).

This sequence belongs to the MnmG family. Homodimer. Heterotetramer of two MnmE and two MnmG subunits. The cofactor is FAD.

Its subcellular location is the cytoplasm. Functionally, NAD-binding protein involved in the addition of a carboxymethylaminomethyl (cmnm) group at the wobble position (U34) of certain tRNAs, forming tRNA-cmnm(5)s(2)U34. The chain is tRNA uridine 5-carboxymethylaminomethyl modification enzyme MnmG from Acinetobacter baumannii (strain AYE).